The primary structure comprises 172 residues: Ribosome maturation factor RimM (172 aa).

A PRC barrel domain is found at 96–168; the sequence is EGEFYYHQII…RVDVELMEGL (73 aa).

Belongs to the RimM family. In terms of assembly, binds ribosomal protein uS19.

It localises to the cytoplasm. Its function is as follows. An accessory protein needed during the final step in the assembly of 30S ribosomal subunit, possibly for assembly of the head region. Essential for efficient processing of 16S rRNA. May be needed both before and after RbfA during the maturation of 16S rRNA. It has affinity for free ribosomal 30S subunits but not for 70S ribosomes. In Streptococcus pyogenes serotype M1, this protein is Ribosome maturation factor RimM.